The following is a 97-amino-acid chain: Large ribosomal subunit protein eL30 (97 aa).

It belongs to the eukaryotic ribosomal protein eL30 family.

The protein is Large ribosomal subunit protein eL30 of Methanoregula boonei (strain DSM 21154 / JCM 14090 / 6A8).